The following is a 327-amino-acid chain: GMP reductase (327 aa).

The active-site Thioimidate intermediate is C176. NADP(+) is bound at residue 205 to 228 (IIADGGIRTHGDIAKSIRFGATMV).

The protein belongs to the IMPDH/GMPR family. GuaC type 2 subfamily.

It carries out the reaction IMP + NH4(+) + NADP(+) = GMP + NADPH + 2 H(+). Functionally, catalyzes the irreversible NADPH-dependent deamination of GMP to IMP. It functions in the conversion of nucleobase, nucleoside and nucleotide derivatives of G to A nucleotides, and in maintaining the intracellular balance of A and G nucleotides. In Streptococcus equi subsp. equi (strain 4047), this protein is GMP reductase.